Here is a 208-residue protein sequence, read N- to C-terminus: Uracil phosphoribosyltransferase (208 aa).

5-phospho-alpha-D-ribose 1-diphosphate is bound by residues Arg78, Arg103, and Asp130–Ser138. Uracil is bound by residues Ile193 and Gly198–Ala200. Asp199 lines the 5-phospho-alpha-D-ribose 1-diphosphate pocket.

This sequence belongs to the UPRTase family. Mg(2+) serves as cofactor.

The catalysed reaction is UMP + diphosphate = 5-phospho-alpha-D-ribose 1-diphosphate + uracil. It participates in pyrimidine metabolism; UMP biosynthesis via salvage pathway; UMP from uracil: step 1/1. With respect to regulation, allosterically activated by GTP. Catalyzes the conversion of uracil and 5-phospho-alpha-D-ribose 1-diphosphate (PRPP) to UMP and diphosphate. In Brucella anthropi (strain ATCC 49188 / DSM 6882 / CCUG 24695 / JCM 21032 / LMG 3331 / NBRC 15819 / NCTC 12168 / Alc 37) (Ochrobactrum anthropi), this protein is Uracil phosphoribosyltransferase.